The sequence spans 812 residues: MAAPEAWRARSCWFCEVAAATTMEATSREAAPAKSSASGPNAPPALFELCGRAVSAHMGVLESGVWALPGPILQSILPLLNIYYLERIEETALKKGLSTQAIWRRLWDELMKTRPSSLESVTCWRAKFMEAFFSHVLRGTIDVSSDRRLCDQRFSPLLHSSRHVRQLTICNMLQGATELVAEPNRRVLETLASSLHTLKFRHLLFSDVAAQQSLRQLLHQLIHHGAVSQVSLYSWPVPESALFILILTMSAGFWQPGPGGPPCRLCGEASRGRAPSRDEGSLLLGSRRPRRDAAERCAAALMASRRKSEAKQMPRAAPATRVTRRSTQESLTAGGTDLKRELHPPATSHEAPGTKRSPSAPAATSSASSSTSSYKRAPASSAPQPKPLKRFKRAAGKKGARTRQGPGAESEDLYDFVFIVAGEKEDGEEMEIGEVACGALDGSDPSCLGLPALEASQRFRSISTLELFTVPLSTEAALTLCHLLSSWVSLESLTLSYNGLGSNIFRLLDSLRALSGQAGCRLRALHLSDLFSPLPILELTRAIVRALPLLRVLSIRVDHPSQRDNPGVPGNAGPPSHIIGDEEIPENCLEQLEMGFPRGAQPAPLLCSVLKASGSLQQLSLDSATFASPQDFGLVLQTLKEYNLALKRLSFHDMNLADCQSEVLFLLQNLTLQEITFSFCRLFEKRPAQFLPEMVAAMKGNSTLKGLRLPGNRLGNAGLLALADVFSEDSSSSLCQLDISSNCIKPDGLLEFAKRLERWGRGAFGHLRLFQNWLDQDAVTAREAIRRLRATCHVVSDSWDSSQAFADYVSTM.

Residues 45–54 (ALFELCGRAV) form an interaction with Elongin BC complex region. Residues serine 155, serine 276, and serine 326 each carry the phosphoserine modification. A disordered region spans residues 267–408 (GEASRGRAPS…GARTRQGPGA (142 aa)). Residue threonine 327 is modified to Phosphothreonine. The segment covering 354–381 (TKRSPSAPAATSSASSSTSSYKRAPASS) has biased composition (low complexity). Residues serine 357 and serine 373 each carry the phosphoserine modification. Positions 387–401 (PLKRFKRAAGKKGAR) are enriched in basic residues. LRR repeat units lie at residues 487–507 (WVSLESLTLSYNGLGSNIFRL), 518–530 (AGCRLRALHLSDL), 531–555 (FSPLPILELTRAIVRALPLLRVLSI), 613–635 (SGSLQQLSLDSATFASPQDFGLV), 636–659 (LQTLKEYNLALKRLSFHDMNLADC), 701–728 (NSTLKGLRLPGNRLGNAGLLALADVFSE), and 731–752 (SSSLCQLDISSNCIKPDGLLEF).

As to quaternary structure, part of an E3 ubiquitin-protein ligase complex with Elongin BC (ELOB and ELOC), RBX1 and CUL5. Component of a probable ECS(LRRC41) complex which contains CUL5, RNF7/RBX2, Elongin BC and LRRC41. Interacts with CUL5, RNF7, ELOB and ELOC.

Its pathway is protein modification; protein ubiquitination. Its function is as follows. Probable substrate recognition component of an ECS (Elongin BC-CUL2/5-SOCS-box protein) E3 ubiquitin ligase complex which mediates the ubiquitination and subsequent proteasomal degradation of target proteins. In Homo sapiens (Human), this protein is Leucine-rich repeat-containing protein 41 (LRRC41).